Here is a 122-residue protein sequence, read N- to C-terminus: UPF0102 protein VIBHAR_00890 (122 aa).

It belongs to the UPF0102 family.

The sequence is that of UPF0102 protein VIBHAR_00890 from Vibrio campbellii (strain ATCC BAA-1116).